A 153-amino-acid chain; its full sequence is Histone H2B.4 (153 aa).

Composition is skewed to basic and acidic residues over residues 1–10 and 20–54; these read MAPKKDEKPA and AKAE…GEKK. Residues 1–60 are disordered; the sequence is MAPKKDEKPATAEAGAEAPAKAEAKPKAEKAAKKAKKEPSKKAAKEPKGDGEKKDKKKKK. Lys41 and Lys42 each carry N6-acetyllysine. Lys149 is covalently cross-linked (Glycyl lysine isopeptide (Lys-Gly) (interchain with G-Cter in ubiquitin)).

Belongs to the histone H2B family. In terms of assembly, the nucleosome is a histone octamer containing two molecules each of H2A, H2B, H3 and H4 assembled in one H3-H4 heterotetramer and two H2A-H2B heterodimers. The octamer wraps approximately 147 bp of DNA. In terms of processing, the N-terminus is blocked. Can be acetylated to form H2BK33ac and H2BK34ac. Acetylated mainly on the ubiquitinated form. Post-translationally, monoubiquitinated to form H2BK143ub1; which is increased during the light period and may give a specific tag for epigenetic transcriptional activation.

It localises to the nucleus. The protein resides in the chromosome. Functionally, core component of nucleosome. Nucleosomes wrap and compact DNA into chromatin, limiting DNA accessibility to the cellular machineries which require DNA as a template. Histones thereby play a central role in transcription regulation, DNA repair, DNA replication and chromosomal stability. DNA accessibility is regulated via a complex set of post-translational modifications of histones, also called histone code, and nucleosome remodeling. This Chlamydomonas reinhardtii (Chlamydomonas smithii) protein is Histone H2B.4.